The chain runs to 305 residues: Homoserine O-succinyltransferase (305 aa).

Cys142 acts as the Acyl-thioester intermediate in catalysis. Substrate contacts are provided by Lys163 and Ser192. Catalysis depends on His235, which acts as the Proton acceptor. Glu237 is a catalytic residue. A substrate-binding site is contributed by Arg249.

The protein belongs to the MetA family.

It localises to the cytoplasm. It carries out the reaction L-homoserine + succinyl-CoA = O-succinyl-L-homoserine + CoA. It participates in amino-acid biosynthesis; L-methionine biosynthesis via de novo pathway; O-succinyl-L-homoserine from L-homoserine: step 1/1. Transfers a succinyl group from succinyl-CoA to L-homoserine, forming succinyl-L-homoserine. This chain is Homoserine O-succinyltransferase, found in Psychromonas ingrahamii (strain DSM 17664 / CCUG 51855 / 37).